We begin with the raw amino-acid sequence, 460 residues long: MLKILIPTIMLFPTTWFMNKKWLWSSITTHSLLISLLSLSWFKWNMDIGWDFSNQYLAIDPLSAPLLILTCWLLPLMILASQNHITPEPLTRQRIYISLLISLQVFLIMAFSATEMILFYIMFEATLIPTLIIITRWGNQTERLNAGTYFLFYTLIGSLPLLIALLFMQNDLNTLSMFIIQYSHLPNPSSWANKFWWTACLIAFLVKMPLYGVHLWLPKAHVEAPIAGSMILAAVLLKLGGYGMMRIIIMLNPITKEMAYPFIILAIWGIVMTSSICLRQTDLKSMIAYSSVSHMGLVAGAILIQTPWSFAGAITLMIAHGLVSSALFCLANTNYERIHSRTLLLARGVQVILPLMATWWLLANLANLALPPSPNLVGELLIISSLFNWSNWTILLTGIGVLITASYSLYMFLMTQRGLTSKHLMNLNPSHTREHLLLTLHVLPVLLLILKPELIWGWTF.

Transmembrane regions (helical) follow at residues 22–42, 59–79, 94–113, 117–139, 148–168, 195–215, 231–251, 258–278, 286–306, 310–330, 343–362, 394–414, and 436–456; these read WLWSSITTHSLLISLLSLSWF, IDPLSAPLLILTCWLLPLMIL, RIYISLLISLQVFLIMAFSA, ILFYIMFEATLIPTLIIITRWGN, TYFLFYTLIGSLPLLIALLFM, FWWTACLIAFLVKMPLYGVHL, ILAAVLLKLGGYGMMRIIIML, MAYPFIILAIWGIVMTSSICL, MIAYSSVSHMGLVAGAILIQT, FAGAITLMIAHGLVSSALFCL, LLLARGVQVILPLMATWWLL, ILLTGIGVLITASYSLYMFLM, and LLLTLHVLPVLLLILKPELIW.

Belongs to the complex I subunit 4 family.

The protein localises to the mitochondrion membrane. It carries out the reaction a ubiquinone + NADH + 5 H(+)(in) = a ubiquinol + NAD(+) + 4 H(+)(out). In terms of biological role, core subunit of the mitochondrial membrane respiratory chain NADH dehydrogenase (Complex I) that is believed to belong to the minimal assembly required for catalysis. Complex I functions in the transfer of electrons from NADH to the respiratory chain. The immediate electron acceptor for the enzyme is believed to be ubiquinone. This Scyliorhinus canicula (Small-spotted catshark) protein is NADH-ubiquinone oxidoreductase chain 4 (MTND4).